The following is a 288-amino-acid chain: Eukaryotic translation initiation factor 3 subunit G (288 aa).

The interval 1–35 is disordered; the sequence is MSRVANNRDWADDEDLEDSNELPQSTTTTNKDGTQ. Residues 11-20 show a composition bias toward acidic residues; it reads ADDEDLEDSN. Residues 21–35 show a composition bias toward polar residues; sequence ELPQSTTTTNKDGTQ. Residues 208-286 enclose the RRM domain; the sequence is ATLRVTNVSE…LILRVEFAKK (79 aa).

It belongs to the eIF-3 subunit G family. In terms of assembly, component of the eukaryotic translation initiation factor 3 (eIF-3) complex.

It is found in the cytoplasm. RNA-binding component of the eukaryotic translation initiation factor 3 (eIF-3) complex, which is involved in protein synthesis of a specialized repertoire of mRNAs and, together with other initiation factors, stimulates binding of mRNA and methionyl-tRNAi to the 40S ribosome. The eIF-3 complex specifically targets and initiates translation of a subset of mRNAs involved in cell proliferation. This subunit can bind 18S rRNA. The chain is Eukaryotic translation initiation factor 3 subunit G (tif35) from Botryotinia fuckeliana (strain B05.10) (Noble rot fungus).